A 2620-amino-acid polypeptide reads, in one-letter code: Ubiquitin carboxyl-terminal hydrolase 24 (2620 aa).

The 42-residue stretch at 3-44 folds into the UBA domain; that stretch reads SEEEQHMTTLLCMGFSDPATIRKALRLAKNDINEAVALLTNE. The segment at 45–102 is disordered; sequence RPGLDYGGYEPMDSGGGPSPGPGGGPRGDGGGDGGGGGPSRGGSTGGGGGFDPPPAYH. The span at 58–95 shows a compositional bias: gly residues; it reads SGGGPSPGPGGGPRGDGGGDGGGGGPSRGGSTGGGGGF. 2 positions are modified to phosphoserine: serine 63 and serine 88. Phosphotyrosine is present on tyrosine 942. Disordered stretches follow at residues 1034 to 1054 and 1129 to 1151; these read TSGSGTPSGSSADSSTSSSSS and TLLSESSSQSSKSPSLSSKQQHQ. Low complexity predominate over residues 1131–1151; sequence LSESSSQSSKSPSLSSKQQHQ. 2 positions are modified to phosphoserine: serine 1141 and serine 1285. The 354-residue stretch at 1689-2042 folds into the USP domain; the sequence is VGLRNGGATC…NAYMLFYQRV (354 aa). Residue cysteine 1698 is the Nucleophile of the active site. The interval 1921-1945 is disordered; that stretch reads ARQDSSSEVGENGRSVDQGGGGSPR. Phosphoserine is present on serine 1943. Histidine 1970 acts as the Proton acceptor in catalysis. Serine 2047, serine 2077, and serine 2561 each carry phosphoserine. The segment at 2063–2090 is disordered; that stretch reads AEDLSLSAPSSPEISPQSSPRPHRPNND. Over residues 2069–2082 the composition is skewed to low complexity; the sequence is SAPSSPEISPQSSP. Threonine 2565 carries the post-translational modification Phosphothreonine. The interval 2575 to 2620 is disordered; the sequence is EKEQSGSSNGSESSPANENGDRHLQQGSESPMMIGELRSDLDDVDP. Low complexity predominate over residues 2579-2592; sequence SGSSNGSESSPANE. Serine 2604 carries the phosphoserine modification. Basic and acidic residues predominate over residues 2611 to 2620; that stretch reads LRSDLDDVDP.

It belongs to the peptidase C19 family. In terms of assembly, (Microbial infection) Interacts with human cytomegalovirus protein UL38.

The catalysed reaction is Thiol-dependent hydrolysis of ester, thioester, amide, peptide and isopeptide bonds formed by the C-terminal Gly of ubiquitin (a 76-residue protein attached to proteins as an intracellular targeting signal).. Ubiquitin-specific protease that regulates cell survival in various contexts through modulating the protein stability of some of its substrates including DDB2, MCL1 or TP53. Plays a positive role on ferritinophagy where ferritin is degraded in lysosomes and releases free iron. In Homo sapiens (Human), this protein is Ubiquitin carboxyl-terminal hydrolase 24 (USP24).